Consider the following 1059-residue polypeptide: Isoleucine--tRNA ligase (1059 aa).

Positions 47–57 (PYTSGQMHLGT) match the 'HIGH' region motif. The short motif at 606–610 (KMSKS) is the 'KMSKS' region element. Lys-609 serves as a coordination point for ATP.

It belongs to the class-I aminoacyl-tRNA synthetase family. IleS type 2 subfamily. In terms of assembly, monomer. Requires Zn(2+) as cofactor.

Its subcellular location is the cytoplasm. It catalyses the reaction tRNA(Ile) + L-isoleucine + ATP = L-isoleucyl-tRNA(Ile) + AMP + diphosphate. Its function is as follows. Catalyzes the attachment of isoleucine to tRNA(Ile). As IleRS can inadvertently accommodate and process structurally similar amino acids such as valine, to avoid such errors it has two additional distinct tRNA(Ile)-dependent editing activities. One activity is designated as 'pretransfer' editing and involves the hydrolysis of activated Val-AMP. The other activity is designated 'posttransfer' editing and involves deacylation of mischarged Val-tRNA(Ile). The protein is Isoleucine--tRNA ligase of Haloquadratum walsbyi (strain DSM 16790 / HBSQ001).